The sequence spans 811 residues: Phosphoinositide 3-kinase adapter protein 1 (811 aa).

The TIR domain occupies 8–146 (RGCDILIFYS…AVRKAISEDS (139 aa)). Positions 10–145 (CDILIFYSPD…AAVRKAISED (136 aa)) are necessary and sufficient to mediate inhibition of NF-kappa-B downstream of activated TLRs; may mediate interaction with MYD88 and TIRAP. Residues 146–169 (SGCDSVTDTEPEDERELPFSKQTN) are disordered. Positions 182-318 (VQPDRIRCGA…NIPASGLHLF (137 aa)) constitute a DBB domain. Tyr264 carries the post-translational modification Phosphotyrosine. Phosphotyrosine; by SYK occurs at positions 420, 445, and 460. Tyr513 bears the Phosphotyrosine; by ABL1 mark. The segment at 525–551 (DLANRPPVPVPRPEASAPGPPPPPDNE) is disordered. Pro residues predominate over residues 530-550 (PPVPVPRPEASAPGPPPPPDN). 3 positions are modified to phosphotyrosine; by ABL1: Tyr553, Tyr570, and Tyr594. At Ser642 the chain carries Phosphoserine. Tyr694 bears the Phosphotyrosine; by ABL1 mark. The segment at 702 to 811 (VLPARTELRR…PPPPVPPRGR (110 aa)) is disordered. The span at 707-716 (TELRRGDWKT) shows a compositional bias: basic and acidic residues. The span at 717–740 (DSMSSTASSTSNRSSTRSLLSVSS) shows a compositional bias: low complexity. Ser718 is subject to Phosphoserine. Positions 801-811 (HPPPPVPPRGR) are enriched in pro residues.

In terms of assembly, homooligomer. Interacts (phosphorylated on tyrosine residues within YXXM motifs) with PIK3R1 (via SH2 domain); required for BCR- and TLR-mediated activation of phosphoinositide 3-kinase. Interacts (via polyproline C-terminal region) with ABI1 (via SH3 domain); the interaction promotes phosphorylation of PIK3AP1 by ABL1. May interact with MYD88 and TIRAP. Constitutively phosphorylated. Phosphorylated on tyrosine residues in C-terminal region by ABL1. Phosphorylated on tyrosine residues within the YXXM motifs by BTK and SYK. Isoform 1 and isoform 2 are phosphorylated on tyrosine residues, most likely within the YXXM motifs, via CD19 activation. Toll-like receptor activation induces appearance of a phosphorylated form associated with membranes. Predominantly expressed in spleen (at protein level). Expressed at lower levels in thymus, liver and lung. Expressed in B-cells, macrophages and natural killer (NK) cells.

The protein resides in the cytoplasm. It is found in the cell membrane. Functionally, signaling adapter that contributes to B-cell development by linking B-cell receptor (BCR) signaling to the phosphoinositide 3-kinase (PI3K)-Akt signaling pathway. Has a complementary role to the BCR coreceptor CD19, coupling BCR and PI3K activation by providing a docking site for the PI3K subunit PIK3R1. Alternatively, links Toll-like receptor (TLR) signaling to PI3K activation, a process preventing excessive inflammatory cytokine production. Also involved in the activation of PI3K in natural killer cells. May be involved in the survival of mature B-cells via activation of REL. This Mus musculus (Mouse) protein is Phosphoinositide 3-kinase adapter protein 1 (Pik3ap1).